The chain runs to 1614 residues: Protein scribble homolog (1614 aa).

Residues 1–809 (MLKCIPLWRC…MRLWRERMVE (809 aa)) are sufficient for targeting to adherens junction and to inhibit cell proliferation. 17 LRR repeats span residues 11-34 (NRHV…IYRY), 35-58 (SRSL…FFRL), 59-81 (LNLR…VANF), 83-105 (QLVE…KFCK), 107-127 (LEIA…FTQL), 128-150 (RSLA…VGNL), 151-173 (ANLV…LSFL), 174-196 (VKLE…LGAL), 197-219 (PNLR…LGNL), 221-242 (RLVC…LGGL), 243-265 (LLLT…IGQL), 267-288 (QLSI…IGDC), 289-311 (ENLS…LGKL), 312-334 (TKLT…IGGC), 336-357 (ALSV…LAHT), 359-380 (ELHV…LTHL), and 382-405 (LKAL…DDAQ). A Phosphoserine modification is found at S37. Residue T378 is modified to Phosphothreonine. Disordered regions lie at residues 417 to 441 (PQQP…SDAP), 462 to 608 (GAAA…RLIR), and 636 to 692 (AQPD…VVSA). Residues 428–437 (GLQSSPSESW) show a composition bias toward polar residues. Position 475 is a phosphothreonine (T475). Residues 479-494 (SELKVMKRGVEERRGE) show a composition bias toward basic and acidic residues. A compositionally biased stretch (polar residues) spans 516 to 533 (TESGLSEDSQPSTGTASQ). The span at 548–557 (QQEAAPNAQE) shows a compositional bias: low complexity. Residues 662–686 (EEEDEEDEEEDEEEEEVAVAEEDKE) show a composition bias toward acidic residues. The stretch at 664–691 (EDEEDEEEDEEEEEVAVAEEDKEEAVVS) forms a coiled coil. Phosphoserine is present on residues S699 and S755. Residues 708–1219 (IEPARIEEEE…SLESVSSIDR (512 aa)) are interaction with ARHGEF7. A PDZ 1 domain is found at 719 to 806 (TLTIVRQTGG…TVQMRLWRER (88 aa)). The segment at 719-1184 (TLTIVRQTGG…TVLVCDGFDT (466 aa)) is required for interaction with VIM. T817 is modified (phosphothreonine). 3 positions are modified to phosphoserine: S826, S866, and S930. The 89-residue stretch at 853-941 (VACLVRSEKG…TIALLLEREA (89 aa)) folds into the PDZ 2 domain. A disordered region spans residues 940–971 (EAGGPLPPSPLPHSPPPPVTAPSTVVTASPGE). A compositionally biased stretch (pro residues) spans 944–959 (PLPPSPLPHSPPPPVT). A compositionally biased stretch (low complexity) spans 960 to 969 (APSTVVTASP). 2 PDZ domains span residues 994-1083 (EICL…RRDP) and 1090-1178 (ELCI…TVLV). Phosphoserine is present on residues S1130, S1210, S1213, S1216, S1222, S1260, S1268, and S1271. Positions 1214-1448 (VSSIDRELSP…LPDRALSPAE (235 aa)) are disordered. The span at 1217-1232 (IDRELSPEGCGKEKEP) shows a compositional bias: basic and acidic residues. T1304 is subject to Phosphothreonine. S1310 is subject to Phosphoserine. A compositionally biased stretch (basic and acidic residues) spans 1315–1327 (SFRERQKYFELEV). A Phosphoserine modification is found at S1340. Residues 1341 to 1368 (LVGADDLRKMQEEEARKLQQKRAQLMRE) are a coiled coil. Basic and acidic residues predominate over residues 1345-1357 (DDLRKMQEEEARK). Positions 1378–1390 (LDGEAPDDEEPEE) are enriched in acidic residues. Residues 1396–1408 (GPAAGLSPSSPQP) show a composition bias toward low complexity. Phosphoserine occurs at positions 1402 and 1405. Positions 1418-1429 (AKAERRHQERLR) are enriched in basic and acidic residues. Phosphoserine is present on residues S1432, S1445, and S1467. Residues 1476–1524 (QMVLSKSQEGRSRRGPLERLAEAPSPAPTPSPTPVEDLGLQTSTSPGRL) are disordered. Basic and acidic residues predominate over residues 1483 to 1496 (QEGRSRRGPLERLA). Position 1500 is a phosphoserine (S1500). A Phosphothreonine modification is found at T1504. Residues S1506, S1520, and S1550 each carry the phosphoserine modification. The interval 1581–1614 (GRPSPGTVGPEEVTLCSSRRPVRPGRRGLGPVPS) is disordered.

The protein belongs to the LAP (LRR and PDZ) protein family. In terms of assembly, interacts with UBE3A. Interacts with PAK1 and PAK2. Interacts (via PDZ domains) with VANGL2. Interacts (via PDZ domains) with LPP and TRIP6; the interaction is direct. Interacts (via PDZ domains) with TJP2. Interacts (via PDZ domains) with APC; may mediate APC targeting to adherens junctions of epithelial cells. Interacts (via PDZ domains) with TSHR; regulates TSHR trafficking and function. Interacts with ARHGEF7 and GIT1; interacts directly with ARHGEF7. Interacts with CTNNB1. Interacts with MAPK12. Interacts (via PDZ domains 1 and 3) with MCC. Interacts with DLG5. Interacts with STK4/MST1 and LATS1 in the presence of DLG5. Interacts (via PDZ domain 3) with CRTAM (via PDZ-binding motif); the interaction promotes CRTAM and SCRIB polarization in a subset of CD4+ T-cells. Interacts with YES1, when YES1 is in a closed conformation; the interaction facilitates YES1 autophosphorylation. Interacts (via PDZ domains) with VIM; the interaction protects SCRIB from proteasomal degradation and facilitates SCRIB localization to intermediate filaments, the interaction is reduced by cell contact inhibition. Post-translationally, ubiquitinated; targeted for UBE3A-dependent multiubiquitination and degraded. Palmitoylated. Could be depalmitoylated by LYPLA1 and/or LYPLA2. Palmitoylation of SCRIB by ZDHHC7 is required for its localization to cell-cell junctions, function in the establishement of epithelial cell polarity and the regulation of downstream signaling pathways important for epithelial cell differentiation.

The protein localises to the cell membrane. Its subcellular location is the cell junction. It localises to the adherens junction. The protein resides in the cell projection. It is found in the lamellipodium. The protein localises to the cytoplasm. Its subcellular location is the postsynapse. It localises to the presynapse. Scaffold protein involved in different aspects of polarized cell differentiation regulating epithelial and neuronal morphogenesis and T-cell polarization. Via its interaction with CRTAM, required for the late phase polarization of a subset of CD4+ T-cells, which in turn regulates TCR-mediated proliferation and IFNG and IL22 production. Plays a role in cell directional movement, cell orientation, cell sheet organization and Golgi complex polarization at the cell migration front. Promotes epithelial cell layer barrier function via maintaining cell-cell adhesion. Most probably functions in the establishment of apico-basal cell polarity. May function in cell proliferation regulating progression from G1 to S phase and as a positive regulator of apoptosis for instance during acinar morphogenesis of the mammary epithelium. May regulate cell invasion via MAPK-mediated cell migration and adhesion. May play a role in exocytosis and in the targeting of synaptic vesicles to synapses. Functions as an activator of Rac GTPase activity. This Canis lupus familiaris (Dog) protein is Protein scribble homolog.